The following is a 412-amino-acid chain: P-selectin glycoprotein ligand 1 (412 aa).

A signal peptide spans 1-17; the sequence is MPLQLLLLLILLGPGNS. Positions 18 to 41 are excised as a propeptide; sequence LQLWDTWADEAEKALGPLLARDRR. The Extracellular portion of the chain corresponds to 18 to 320; it reads LQLWDTWADE…APDHISVKQC (303 aa). Glutamine 42 carries the pyrrolidone carboxylic acid modification. 3 positions are modified to sulfotyrosine: tyrosine 46, tyrosine 48, and tyrosine 51. The segment at 56–95 is disordered; the sequence is ETEPPEMLRNSTDTTPLTGPGTPESTTVEPAARRSTGLDA. Residue threonine 57 is glycosylated (O-linked (GalNAc...) threonine). A glycan (N-linked (GlcNAc...) asparagine) is linked at asparagine 65. Low complexity predominate over residues 66 to 82; the sequence is STDTTPLTGPGTPESTT. An N-linked (GlcNAc...) asparagine glycan is attached at asparagine 111. Tandem repeats lie at residues 122–131, 132–141, 142–151, 162–171, 182–191, 192–201, 202–211, 212–221, 222–231, 232–241, 242–251, and 252–261. The 12 X 10 AA tandem repeats stretch occupies residues 122–261; the sequence is QTTQPAATEA…QTTPLAAMEA (140 aa). Disordered stretches follow at residues 125–146 and 166–252; these read QPAA…TTPL and LAAT…TEAQ. Residue asparagine 302 is glycosylated (N-linked (GlcNAc...) asparagine). A helical transmembrane segment spans residues 321–341; that stretch reads LLAILILALVATIFFVCTVVL. Residues 342–412 are Cytoplasmic-facing; that stretch reads AVRLSRKGHM…DDLTLHSFLP (71 aa). Residues 374-412 form a disordered region; it reads EGPSATANGGLSKAKSPGLTPEPREDREGDDLTLHSFLP. The span at 395–406 shows a compositional bias: basic and acidic residues; sequence EPREDREGDDLT. A Phosphothreonine modification is found at threonine 406. Residue serine 409 is modified to Phosphoserine.

Homodimer; disulfide-linked. Interaction with P-, E- and L-selectins, through their lectin/EGF domains, is required for promoting recruitment and rolling of leukocytes. These interactions require sialyl Lewis X glycan modification but there is a differing dependence for tyrosine sulfations. Sulfation on Tyr-51 of PSGL1 is most important for high affinity L-selectin/SELL binding while P-selectin/SELP requires sulfation on Tyr-48. E-selectin/SELE binds with much lower affinity and requires the sLe(x) epitope, but apparently not tyrosine sulfation. Dimerization appears not to be required for P-selectin/SELP binding. Interacts with SNX20. Interacts with MSN and SYK; mediates the activation of SYK by SELPLG. Interacts with HAVCR1. In terms of assembly, (Microbial infection) Interacts with enterovirus 71 capsid proteins. As to quaternary structure, (Microbial infection) Interacts with Staphylococcus aureus proteins SSL5 and SSL11; these interactions prevent SELPLG-mediated neutrophil rolling. Post-translationally, displays complex, core-2, sialylated and fucosylated O-linked oligosaccharides, at least some of which appear to contain poly-N-acetyllactosamine with varying degrees of substitution. Mainly disialylated or neutral forms of the core-2 tetrasaccharide, Galbeta1--&gt;4GlcNAcbeta1--&gt;6(Galbeta1--&gt;3)GalNAcOH. The GlcN:GalN ratio is approximately 2:1 and the Man:Fuc ratio 3:5. Contains about 14% fucose with alpha-1,3 linkage present in two forms: One species is a disialylated, monofucosylated glycan, and the other, a monosialylated, trifucosylated glycan with a polylactosamine backbone. The fucosylated forms carry the Lewis antigen and are important for interaction with selectins and for functioning in leukocyte rolling. The modification containing the sialyl Lewis X glycan is on Thr-57. No sulfated O-glycans. Some N-glycosylation. Sulfation, in conjunction with the SLe(x)-containing glycan, is necessary for P- and L-selectin binding. High affinity P-selectin binding has a preferred requirement for the isomer sulfated on both Tyr-48 and Tyr-51, whereas L-selectin binding requires predominantly sulfation on Tyr-51 with sulfation on Tyr-48 playing only a minor role. These sulfations play an important role in L- and P-selectin-mediated neutrophil recruitment, and leukocyte rolling. In terms of tissue distribution, expressed on neutrophils, monocytes and most lymphocytes.

It localises to the membrane. Functionally, a SLe(x)-type proteoglycan, which through high affinity, calcium-dependent interactions with E-, P- and L-selectins, mediates rapid rolling of leukocytes over vascular surfaces during the initial steps in inflammation. Critical for the initial leukocyte capture. Its function is as follows. (Microbial infection) Acts as a receptor for enterovirus 71. This is P-selectin glycoprotein ligand 1 (SELPLG) from Homo sapiens (Human).